Reading from the N-terminus, the 166-residue chain is tRNA-acetylating toxin (166 aa).

A disordered region spans residues 1 to 22 (MSGYSAPRRISDADDVTSFSSG). The N-acetyltransferase domain maps to 1 to 162 (MSGYSAPRRI…LMLLMKDARA (162 aa)). Residue Tyr-138 is part of the active site.

Belongs to the acetyltransferase family. GNAT subfamily. In terms of assembly, homodimer, forms a complex with cognate antitoxin TacA.

It catalyses the reaction glycyl-tRNA(Gly) + acetyl-CoA = N-acetylglycyl-tRNA(Gly) + CoA + H(+). Its function is as follows. Toxic component of a type II toxin-antitoxin (TA) system. Overexpression of this gene alone in M.smegmatis inhibits growth, while overexpression of the tacA-tacT operon does not. Acetylates glycyl-tRNA(Gly) but not other tRNAs, blocks in vitro translation in the presence, but not absence, of acetyl-coenzyme A. Peptidyl-tRNA hydrolase (pth) counteracts the product of this enzyme in vitro. Neutralized by cognate antitoxin TacA. Does not seem to be active in laboratory growth conditions. TacA-TacT both represses and derepresses expression of its own operon. The protein is tRNA-acetylating toxin of Mycobacterium tuberculosis (strain ATCC 25618 / H37Rv).